The following is a 226-amino-acid chain: V-type proton ATPase subunit E 2 (226 aa).

The protein belongs to the V-ATPase E subunit family. V-ATPase is a heteromultimeric enzyme made up of two complexes: the ATP-hydrolytic V1 complex and the proton translocation V0 complex. The V1 complex consists of three catalytic AB heterodimers that form a heterohexamer, three peripheral stalks each consisting of EG heterodimers, one central rotor including subunits D and F, and the regulatory subunits C and H. The proton translocation complex V0 consists of the proton transport subunit a, a ring of proteolipid subunits c9c'', rotary subunit d, subunits e and f, and the accessory subunits ATP6AP1/Ac45 and ATP6AP2/PRR. Testis specific.

Functionally, subunit of the V1 complex of vacuolar(H+)-ATPase (V-ATPase), a multisubunit enzyme composed of a peripheral complex (V1) that hydrolyzes ATP and a membrane integral complex (V0) that translocates protons. V-ATPase is responsible for acidifying and maintaining the pH of intracellular compartments and in some cell types, is targeted to the plasma membrane, where it is responsible for acidifying the extracellular environment. The chain is V-type proton ATPase subunit E 2 (ATP6V1E2) from Homo sapiens (Human).